Reading from the N-terminus, the 214-residue chain is Acyl-homoserine-lactone synthase (214 aa).

The protein belongs to the autoinducer synthase family.

It carries out the reaction a fatty acyl-[ACP] + S-adenosyl-L-methionine = an N-acyl-L-homoserine lactone + S-methyl-5'-thioadenosine + holo-[ACP] + H(+). Functionally, required for the synthesis of autoinducer molecules such as OHHL (N-(3-oxohexanoyl)-L-homoserine lactone), and HHL (N-hexanoyl-L-homoserine lactone). In Yersinia enterocolitica, this protein is Acyl-homoserine-lactone synthase (yenI).